Here is a 704-residue protein sequence, read N- to C-terminus: Glycine--tRNA ligase beta subunit (704 aa).

The protein belongs to the class-II aminoacyl-tRNA synthetase family. Tetramer of two alpha and two beta subunits.

It localises to the cytoplasm. The catalysed reaction is tRNA(Gly) + glycine + ATP = glycyl-tRNA(Gly) + AMP + diphosphate. This chain is Glycine--tRNA ligase beta subunit, found in Rhizobium etli (strain ATCC 51251 / DSM 11541 / JCM 21823 / NBRC 15573 / CFN 42).